A 252-amino-acid chain; its full sequence is Small ribosomal subunit protein eS1B (252 aa).

An N-acetylalanine; partial modification is found at Ala-2. Position 251 is a phosphoserine (Ser-251).

It belongs to the eukaryotic ribosomal protein eS1 family. In terms of assembly, component of the small ribosomal subunit (SSU). Mature yeast ribosomes consist of a small (40S) and a large (60S) subunit. The 40S small subunit contains 1 molecule of ribosomal RNA (18S rRNA) and at least 33 different proteins. The large 60S subunit contains 3 rRNA molecules (25S, 5.8S and 5S rRNA) and at least 46 different proteins. eS1 interacts directly with uS11 and eS26, which form part of the mRNA exit tunnel.

It localises to the cytoplasm. Its function is as follows. Component of the ribosome, a large ribonucleoprotein complex responsible for the synthesis of proteins in the cell. The small ribosomal subunit (SSU) binds messenger RNAs (mRNAs) and translates the encoded message by selecting cognate aminoacyl-transfer RNA (tRNA) molecules. The large subunit (LSU) contains the ribosomal catalytic site termed the peptidyl transferase center (PTC), which catalyzes the formation of peptide bonds, thereby polymerizing the amino acids delivered by tRNAs into a polypeptide chain. The nascent polypeptides leave the ribosome through a tunnel in the LSU and interact with protein factors that function in enzymatic processing, targeting, and the membrane insertion of nascent chains at the exit of the ribosomal tunnel. The sequence is that of Small ribosomal subunit protein eS1B (rps102) from Schizosaccharomyces pombe (strain 972 / ATCC 24843) (Fission yeast).